Here is a 90-residue protein sequence, read N- to C-terminus: Putative defensin-like protein 168 (90 aa).

The first 27 residues, 1 to 27 (MKYFTLFMISYIFISIFVFSHIHDVEA), serve as a signal peptide directing secretion. Disulfide bonds link Cys32/Cys90, Cys43/Cys66, Cys51/Cys84, and Cys64/Cys86.

Belongs to the DEFL family.

It is found in the secreted. The polypeptide is Putative defensin-like protein 168 (Arabidopsis thaliana (Mouse-ear cress)).